Here is a 171-residue protein sequence, read N- to C-terminus: Nudix hydrolase DR_0079 (171 aa).

The Nudix hydrolase domain maps to 32 to 162 (ERVRVVNAFL…EAAKGDLAEL (131 aa)). The short motif at 69–91 (GGAVQSGETYEEAFRREAREELN) is the Nudix box element. Mg(2+) is bound by residues E85 and E89.

This sequence belongs to the Nudix hydrolase family. Monomer. Mg(2+) serves as cofactor.

With respect to regulation, inhibited by zinc, calcium or copper ions. In terms of biological role, hydrolase that converts various nucleotide triphosphates (NTPs) to the corresponding nucleotide monophosphates and diphosphate, and nucleotide diphosphates to nucleotide monophosphates and inorganic phosphate. Has a marked preference for cytosine ribonucleoside 5'-diphosphate (CDP) and cytosine ribonucleoside 5'-triphosphate (CTP). Has lower activity towards the deoxyribose nucleotides dCDP and dCTP, and towards dGDP, TDP and UDP. This is Nudix hydrolase DR_0079 from Deinococcus radiodurans (strain ATCC 13939 / DSM 20539 / JCM 16871 / CCUG 27074 / LMG 4051 / NBRC 15346 / NCIMB 9279 / VKM B-1422 / R1).